The sequence spans 441 residues: Serine carboxypeptidase-like 3 (441 aa).

Residues 1 to 30 form the signal peptide; the sequence is MASNYVFSVLRSLLLLIHTVFLGQHHVSSA. Disulfide bonds link cysteine 88–cysteine 331, cysteine 252–cysteine 266, and cysteine 290–cysteine 297. Residue asparagine 109 is glycosylated (N-linked (GlcNAc...) asparagine). The active site involves serine 184. A glycan (N-linked (GlcNAc...) asparagine) is linked at asparagine 350. Aspartate 366 is an active-site residue. N-linked (GlcNAc...) asparagine glycosylation is present at asparagine 382. Histidine 419 is an active-site residue.

This sequence belongs to the peptidase S10 family. As to expression, expressed in roots.

It is found in the secreted. Probable carboxypeptidase. This is Serine carboxypeptidase-like 3 (SCPL3) from Arabidopsis thaliana (Mouse-ear cress).